A 150-amino-acid polypeptide reads, in one-letter code: CASP-like protein 2 (150 aa).

Residues 1-17 are Cytoplasmic-facing; that stretch reads MKPEAGDGRSGWRWVAT. The chain crosses the membrane as a helical span at residues 18–38; that stretch reads FDLILRLAAIVATSTAVLAAM. Topologically, residues 39–41 are extracellular; the sequence is GKT. The helical transmembrane segment at 42–62 threads the bilayer; it reads FVVVVNGVACFYLLMSLPVSI. Residues 63–82 are Cytoplasmic-facing; it reads FNIMRPGACPANRAVLTALD. A helical transmembrane segment spans residues 83-103; the sequence is MVTVALVTAGALVAGILYLVH. At 104–121 the chain is on the extracellular side; sequence KAGDTHADWFSIWSQLDS. Residues 122 to 142 form a helical membrane-spanning segment; the sequence is LSYLAVLALILHVLLSGSILY. The Cytoplasmic segment spans residues 143–150; it reads KQALNIMF.

Belongs to the Casparian strip membrane proteins (CASP) family. In terms of assembly, homodimer and heterodimers.

The protein localises to the cell membrane. This chain is CASP-like protein 2, found in Picea sitchensis (Sitka spruce).